The chain runs to 210 residues: MKKEIASHLLEIGAVFLQPNDPFTWSSGMKSPIYCDNRLTLSYPKVRQAIAAGLEELIKEHFPTVEVIAGTATAGIAHAAWVSDRMDLPMCYVRSKAKGHGKGNQIEGKAEKGQKVVVVEDLISTGGSAITCVEALREAGCEVLGIVSIFTYELESGKEKLEAANVASYSLSDYSALTEVAAEKGMIGQAETKKLQEWRKNPADEAWITA.

5-phospho-alpha-D-ribose 1-diphosphate contacts are provided by residues Arg94, Lys98, His100, and 120–128; that span reads EDLISTGGS. Ser124 is an orotate binding site.

This sequence belongs to the purine/pyrimidine phosphoribosyltransferase family. PyrE subfamily. As to quaternary structure, homodimer. Mg(2+) serves as cofactor.

The catalysed reaction is orotidine 5'-phosphate + diphosphate = orotate + 5-phospho-alpha-D-ribose 1-diphosphate. It participates in pyrimidine metabolism; UMP biosynthesis via de novo pathway; UMP from orotate: step 1/2. Its function is as follows. Catalyzes the transfer of a ribosyl phosphate group from 5-phosphoribose 1-diphosphate to orotate, leading to the formation of orotidine monophosphate (OMP). This is Orotate phosphoribosyltransferase from Bacillus cereus (strain G9842).